Consider the following 130-residue polypeptide: Small ribosomal subunit protein uS8 (130 aa).

The protein belongs to the universal ribosomal protein uS8 family. Part of the 30S ribosomal subunit. Contacts proteins S5 and S12.

In terms of biological role, one of the primary rRNA binding proteins, it binds directly to 16S rRNA central domain where it helps coordinate assembly of the platform of the 30S subunit. The polypeptide is Small ribosomal subunit protein uS8 (Teredinibacter turnerae (strain ATCC 39867 / T7901)).